The primary structure comprises 368 residues: Histidinol-phosphate aminotransferase (368 aa).

Position 224 is an N6-(pyridoxal phosphate)lysine (Lys-224).

It belongs to the class-II pyridoxal-phosphate-dependent aminotransferase family. Histidinol-phosphate aminotransferase subfamily. In terms of assembly, homodimer. Pyridoxal 5'-phosphate serves as cofactor.

It catalyses the reaction L-histidinol phosphate + 2-oxoglutarate = 3-(imidazol-4-yl)-2-oxopropyl phosphate + L-glutamate. Its pathway is amino-acid biosynthesis; L-histidine biosynthesis; L-histidine from 5-phospho-alpha-D-ribose 1-diphosphate: step 7/9. This chain is Histidinol-phosphate aminotransferase, found in Agrobacterium fabrum (strain C58 / ATCC 33970) (Agrobacterium tumefaciens (strain C58)).